The sequence spans 490 residues: Beta-N-acetyl-D-glucosaminide beta-1,4-N-acetylglucosaminyl-transferase (490 aa).

Residues 1-30 (MYLVVCWGRVTGNMISTRHCFSRCKSRSVR) are Cytoplasmic-facing. Residues 31-50 (VIKATAMLFVAAMLFLALHM) form a helical; Signal-anchor for type II membrane protein membrane-spanning segment. N-linked (GlcNAc...) asparagine glycosylation is found at asparagine 51, asparagine 82, asparagine 441, asparagine 459, and asparagine 485. Topologically, residues 51 to 490 (NFSHEASQQN…YLTGNFTIIS (440 aa)) are lumenal.

It belongs to the glycosyltransferase 7 family.

Its subcellular location is the golgi apparatus membrane. The catalysed reaction is an N-acetyl-beta-D-glucosaminyl derivative + UDP-N-acetyl-alpha-D-glucosamine = an N-acetyl-beta-D-glucosaminyl-(1-&gt;4)-N-acetyl-beta-D-glucosaminyl derivative + UDP + H(+). It functions in the pathway protein modification; protein glycosylation. This chain is Beta-N-acetyl-D-glucosaminide beta-1,4-N-acetylglucosaminyl-transferase (GNT), found in Lymnaea stagnalis (Great pond snail).